Consider the following 813-residue polypeptide: MSRINFKKSSASTTPTSPHCPSPRLISLPRCASSSIDRKDQASPMASPSTPLYPKHSDSLHSLSGHHSAGGAGTSDKEPPKFKYKMIMVHLPFDQHSRVEVRPGETARDAISKLLKKRNITPQLCHVNASSDPKQESIELSLTMEEIASRLPGNELWVHSEYLNTVSSIKHAIVRRTFIPPKSCDVCNNPIWMMGFRCEFCQFKFHQRCSSFAPLYCDLLQSVPKNEDLVKELFGIASQVEGPDRSVAEIVLANLAPTSGQSPAATPDSSHPDLTSIKRTGGVKRHPMAVSPQNETSQLSPSGPYPRDRSSSAPNINAINDEATVQHNQRILDALEAQRLEEESRDKTGSLLSTQARHRPHFQSGHILSGARMNRLHPLVDCTPLGSNSPSSTCSSPPGGLIGQPTLGQSPNVSGSTTSSLVAAHLHTLPLTPPQSAPPQKISPGFFRNRSRSPGERLDAQRPRPPQKPHHEDWEILPNEFIIQYKVGSGSFGTVYRGEFFGTVAIKKLNVVDPTPSQMAAFKNEVAVLKKTRHLNVLLFMGWVREPEIAIITQWCEGSSLYRHIHVQEPRVEFEMGAIIDILKQVSLGMNYLHSKNIIHRDLKTNNIFLMDDMSTVKIGDFGLATVKTKWTVNGGQQQQQPTGSILWMAPEVIRMQDDNPYTPQSDVYSFGICMYEILSSHLPYSNINNRDQILFMVGRGYLRPDRSKIRHDTPKSMLKLYDNCIMFDRNERPVFGEVLERLRDIILPKLTRSQSAPNVLHLDSQYSVMDAVMRSQMLSWSYIPPATAKTPQSAAAAAAANKKAYYNVYGLI.

The interval 1 to 79 is disordered; sequence MSRINFKKSS…GGAGTSDKEP (79 aa). The span at 9 to 23 shows a compositional bias: low complexity; that stretch reads SSASTTPTSPHCPSP. In terms of domain architecture, RBD spans 85 to 161; it reads KMIMVHLPFD…PGNELWVHSE (77 aa). The Phorbol-ester/DAG-type zinc-finger motif lies at 170-217; the sequence is KHAIVRRTFIPPKSCDVCNNPIWMMGFRCEFCQFKFHQRCSSFAPLYC. Positions 184, 187, 198, 201, 206, 209, and 217 each coordinate Zn(2+). Polar residues-rich tracts occupy residues 258–273 and 291–301; these read TSGQ…SHPD and SPQNETSQLSP. Disordered stretches follow at residues 258 to 315, 338 to 358, and 383 to 472; these read TSGQ…SAPN, QRLE…QARH, and TPLG…PHHE. A compositionally biased stretch (basic and acidic residues) spans 338–348; the sequence is QRLEEESRDKT. Over residues 386–399 the composition is skewed to low complexity; that stretch reads GSNSPSSTCSSPPG. A compositionally biased stretch (polar residues) spans 406-421; sequence TLGQSPNVSGSTTSSL. Residues 453 to 462 show a composition bias toward basic and acidic residues; the sequence is SPGERLDAQR. Positions 481 to 748 constitute a Protein kinase domain; it reads FIIQYKVGSG…VLERLRDIIL (268 aa). ATP is bound by residues 487-495 and lysine 507; that span reads VGSGSFGTV. Catalysis depends on aspartate 602, which acts as the Proton acceptor.

This sequence belongs to the protein kinase superfamily. TKL Ser/Thr protein kinase family. RAF subfamily. In terms of assembly, interacts with cdf-1 in a zinc-dependent manner which promotes its activity. It depends on Zn(2+) as a cofactor.

It catalyses the reaction L-seryl-[protein] + ATP = O-phospho-L-seryl-[protein] + ADP + H(+). The enzyme catalyses L-threonyl-[protein] + ATP = O-phospho-L-threonyl-[protein] + ADP + H(+). Its function is as follows. Protein kinase that participates in the induction of vulva and has roles in fertility and viability. Acts downstream of the Ras protein let-60. Required for progression of developing oocytes through the pachytene stage. Plays a role in responses to M.nematophilum-mediated bacterial infection by promoting tail swelling and preventing constipation. Positively regulates lifespan upstream of mek-2 and mpk-1. This Caenorhabditis elegans protein is Raf homolog serine/threonine-protein kinase (lin-45).